The chain runs to 831 residues: Heat shock 70 kDa protein 15 (831 aa).

Disordered stretches follow at residues 502-579 (EEEV…KKKV) and 784-831 (IMTK…EGST). Residues 512-526 (DQSEETAKMDTDKAS) are compositionally biased toward basic and acidic residues. Residues serine 533 and serine 536 each carry the phosphoserine modification. The span at 787 to 800 (KPKPAAKAEAPQAK) shows a compositional bias: low complexity.

It belongs to the heat shock protein 70 (TC 1.A.33) family. HSP110/SSE subfamily.

The protein localises to the cytoplasm. It is found in the nucleus. Its function is as follows. In cooperation with other chaperones, Hsp70s are key components that facilitate folding of de novo synthesized proteins, assist translocation of precursor proteins into organelles, and are responsible for degradation of damaged protein under stress conditions. The polypeptide is Heat shock 70 kDa protein 15 (HSP70-15) (Arabidopsis thaliana (Mouse-ear cress)).